The following is a 146-amino-acid chain: UPF0306 protein CKO_04548 (146 aa).

The protein belongs to the UPF0306 family.

The sequence is that of UPF0306 protein CKO_04548 from Citrobacter koseri (strain ATCC BAA-895 / CDC 4225-83 / SGSC4696).